Reading from the N-terminus, the 117-residue chain is Large ribosomal subunit protein bL17 (117 aa).

Belongs to the bacterial ribosomal protein bL17 family. In terms of assembly, part of the 50S ribosomal subunit. Contacts protein L32.

The protein is Large ribosomal subunit protein bL17 of Campylobacter jejuni subsp. jejuni serotype O:6 (strain 81116 / NCTC 11828).